Reading from the N-terminus, the 1180-residue chain is Pesticidal crystal protein Cry4Aa (1180 aa).

Belongs to the delta endotoxin family.

Functionally, promotes colloidosmotic lysis by binding to the midgut epithelial cells of insects. This Bacillus thuringiensis subsp. israelensis protein is Pesticidal crystal protein Cry4Aa (cry4Aa).